The sequence spans 517 residues: Dopamine receptor 4 (517 aa).

Residues 1-46 are Extracellular-facing; that stretch reads MLAYGSDPNAEDLYITMTPSVSTENDTTVWATEEPAAIVWRHPLLA. The N-linked (GlcNAc...) asparagine glycan is linked to N25. A helical membrane pass occupies residues 47-67; it reads IALFSICLLTVAGNCLVVIAV. Residues 68 to 77 are Cytoplasmic-facing; that stretch reads CTKKYLRNPT. Residues 78–98 traverse the membrane as a helical segment; that stretch reads GYLIISLAIADLIVGVIVMPM. At 99–108 the chain is on the extracellular side; it reads NSLFEIANHT. N106 carries an N-linked (GlcNAc...) asparagine glycan. A helical transmembrane segment spans residues 109–129; sequence WLFGLMMCDVFHAMDILASTA. Residues 130–159 are Cytoplasmic-facing; that stretch reads SIWNLCVISLDRYMAGQDPIGYRDKVSKRR. A helical transmembrane segment spans residues 160-180; sequence ILMAILSVWVLSAILSFPGII. The Extracellular segment spans residues 181-209; that stretch reads WWRTSSPHLYEDQSQCLFTDSKMYVSFSS. A helical membrane pass occupies residues 210-230; it reads LVSFYIPLFLILFAYGKVYII. Residues 231–409 lie on the Cytoplasmic side of the membrane; it reads ATRHSKGMRM…YVHEQRAART (179 aa). The interval 309–339 is disordered; sequence NDRGEHNNNNTVRQPLLRGTEGCHSDSISRS. Residues 410 to 430 form a helical membrane-spanning segment; that stretch reads LSIVVGAFILCWTPFFVFTPL. Topologically, residues 431–442 are extracellular; the sequence is TAFCESCFSNKE. The chain crosses the membrane as a helical span at residues 443–463; that stretch reads TIFTFVTWAGHLNSMLNPLIY. The Cytoplasmic portion of the chain corresponds to 464–517; the sequence is SRFSRDFRRAFKQILTCQRQQKVKTAFKTPLSLVFTQLISVTQMWEQPPNTSIE.

The protein belongs to the G-protein coupled receptor 1 family. In terms of tissue distribution, expressed in pharyngeal neurons I1 and I2, neurons ASG, AVL, CAN, PQR, vulva, intestine, rectal glands and rectal epithelial glands. Also expressed in neurons in ray 8 in males.

The protein resides in the cell membrane. Its function is as follows. Receptor for dopamine. The activity of this receptor is mediated by G proteins which activate adenylyl cyclase. In terms of antagonist responses, would be classed with the D1-like dopamine receptor group. The sequence is that of Dopamine receptor 4 (dop-4) from Caenorhabditis elegans.